Here is a 203-residue protein sequence, read N- to C-terminus: Peptidyl-tRNA hydrolase (203 aa).

Y14 is a tRNA binding site. The active-site Proton acceptor is H19. Residues Y64, N66, and N112 each coordinate tRNA.

The protein belongs to the PTH family. As to quaternary structure, monomer.

Its subcellular location is the cytoplasm. The catalysed reaction is an N-acyl-L-alpha-aminoacyl-tRNA + H2O = an N-acyl-L-amino acid + a tRNA + H(+). Its function is as follows. Hydrolyzes ribosome-free peptidyl-tRNAs (with 1 or more amino acids incorporated), which drop off the ribosome during protein synthesis, or as a result of ribosome stalling. In terms of biological role, catalyzes the release of premature peptidyl moieties from peptidyl-tRNA molecules trapped in stalled 50S ribosomal subunits, and thus maintains levels of free tRNAs and 50S ribosomes. This is Peptidyl-tRNA hydrolase from Methylobacterium sp. (strain 4-46).